The primary structure comprises 309 residues: NAD-dependent protein deacylase sirtuin-5B, mitochondrial (309 aa).

The N-terminal 35 residues, 1-35, are a transit peptide targeting the mitochondrion; sequence MILLPFHTRRLVSHVYCGLKPASQNKGIALEMTRP. The 271-residue stretch at 36–306 folds into the Deacetylase sirtuin-type domain; sequence SSNLANFREA…PPALARHETE (271 aa). Residue 57–76 participates in NAD(+) binding; the sequence is GAGVSAESGVPTIIGAGGYW. Substrate is bound by residues Y101 and R104. 139 to 142 provides a ligand contact to NAD(+); it reads QNID. The active-site Proton acceptor is the H157. Zn(2+) contacts are provided by C165, C168, C206, and C211. NAD(+) contacts are provided by residues 248–250, 274–276, and C292; these read GTS and NME.

It belongs to the sirtuin family. Class III subfamily. Requires Zn(2+) as cofactor.

The protein resides in the mitochondrion. It is found in the cytoplasm. It localises to the cytosol. The protein localises to the nucleus. The enzyme catalyses N(6)-malonyl-L-lysyl-[protein] + NAD(+) + H2O = 2''-O-malonyl-ADP-D-ribose + nicotinamide + L-lysyl-[protein]. The catalysed reaction is N(6)-succinyl-L-lysyl-[protein] + NAD(+) + H2O = 2''-O-succinyl-ADP-D-ribose + nicotinamide + L-lysyl-[protein]. It catalyses the reaction N(6)-glutaryl-L-lysyl-[protein] + NAD(+) + H2O = 2''-O-glutaryl-ADP-D-ribose + nicotinamide + L-lysyl-[protein]. Its function is as follows. NAD-dependent lysine demalonylase, desuccinylase and deglutarylase that specifically removes malonyl, succinyl and glutaryl groups on target proteins. Has weak NAD-dependent protein deacetylase activity; however this activity may not be physiologically relevant in vivo. This Xenopus laevis (African clawed frog) protein is NAD-dependent protein deacylase sirtuin-5B, mitochondrial (sirt5-b).